The sequence spans 246 residues: Triosephosphate isomerase (246 aa).

Substrate is bound at residue 9 to 11 (NWK). Residue H91 is the Electrophile of the active site. The active-site Proton acceptor is E161. Substrate-binding positions include G167, S206, and 227–228 (GG).

Belongs to the triosephosphate isomerase family. As to quaternary structure, homodimer.

Its subcellular location is the cytoplasm. The enzyme catalyses D-glyceraldehyde 3-phosphate = dihydroxyacetone phosphate. The protein operates within carbohydrate biosynthesis; gluconeogenesis. It participates in carbohydrate degradation; glycolysis; D-glyceraldehyde 3-phosphate from glycerone phosphate: step 1/1. Its function is as follows. Involved in the gluconeogenesis. Catalyzes stereospecifically the conversion of dihydroxyacetone phosphate (DHAP) to D-glyceraldehyde-3-phosphate (G3P). This chain is Triosephosphate isomerase, found in Ruegeria sp. (strain TM1040) (Silicibacter sp.).